Reading from the N-terminus, the 381-residue chain is DNA repair protein RAD51 homolog 3 (381 aa).

The interval 1–24 (MDEDINKDTNNNNNTTDSNNNNNN) is disordered. Residues 8–24 (DTNNNNNTTDSNNNNNN) are compositionally biased toward low complexity. An ATP-binding site is contributed by 89–96 (GVPGIGKT). A disordered region spans residues 313–381 (GFNHPPPLNP…NDENEMYIEN (69 aa)). Positions 323–377 (EDQEQEKEKEKRKKKNNNNNNNNNNNNNNNNNNNNNNNNNNNNNNNNKNNDENEM) form a coiled coil. Over residues 339–370 (NNNNNNNNNNNNNNNNNNNNNNNNNNNNNNNK) the composition is skewed to low complexity.

This sequence belongs to the RecA family. RAD51 subfamily.

It is found in the nucleus. Functionally, involved in the homologous recombination repair (HRR) pathway of double-stranded DNA breaks arising during DNA replication or induced by DNA-damaging agents. The chain is DNA repair protein RAD51 homolog 3 (rad51c) from Dictyostelium discoideum (Social amoeba).